Here is a 262-residue protein sequence, read N- to C-terminus: F-actin-capping protein subunit alpha (262 aa).

Belongs to the F-actin-capping protein alpha subunit family. Heterodimer of an alpha and a beta subunit.

It is found in the cytoplasm. The protein localises to the cytoskeleton. F-actin-capping proteins bind in a Ca(2+)-independent manner to the fast growing ends of actin filaments (barbed end) thereby blocking the exchange of subunits at these ends. Unlike other capping proteins (such as gelsolin and severin), these proteins do not sever actin filaments. This is F-actin-capping protein subunit alpha (CAP1) from Yarrowia lipolytica (strain CLIB 122 / E 150) (Yeast).